The following is a 501-amino-acid chain: Aminoaldehyde dehydrogenase ALDH10A8, chloroplastic (501 aa).

Na(+) contacts are provided by D99 and L189. NAD(+) contacts are provided by residues 238 to 243 and 238 to 245; these read GSFATG and GSFATGSK. The active-site Proton acceptor is the E260. Positions 294 and 393 each coordinate NAD(+). C294 acts as the Nucleophile in catalysis.

This sequence belongs to the aldehyde dehydrogenase family. In terms of assembly, homodimer. In terms of tissue distribution, widely expressed.

The protein resides in the cytoplasm. The protein localises to the plastid. It localises to the chloroplast. It carries out the reaction 4-aminobutanal + NAD(+) + H2O = 4-aminobutanoate + NADH + 2 H(+). It catalyses the reaction 3-aminopropanal + NAD(+) + H2O = beta-alanine + NADH + 2 H(+). The catalysed reaction is 4-(trimethylamino)butanal + NAD(+) + H2O = 4-(trimethylamino)butanoate + NADH + 2 H(+). The enzyme catalyses 4-guanidinobutanal + NAD(+) + H2O = 4-guanidinobutanoate + NADH + 2 H(+). It carries out the reaction betaine aldehyde + NAD(+) + H2O = glycine betaine + NADH + 2 H(+). It participates in amine and polyamine biosynthesis; betaine biosynthesis via choline pathway; betaine from betaine aldehyde: step 1/1. Dehydrogenase that catalyzes the oxidation of several aminoaldehydes. Metabolizes and detoxifies aldehyde products of polyamine degradation to non-toxic amino acids. Catalyzes the oxidation of 4-aminobutanal and 3-aminopropanal to 4-aminobutanoate and beta-alanine, respectively. Production of 4-aminobutinoate by ALDH10A8 may confer tolerance to salt stress. Catalyzes the oxidation of 4-(trimethylamino)butanal and 4-guanidinobutanal to 4-trimethylammoniobutanoate and 4-guanidinobutanoate, respectively. Involved in glycine betaine biosynthesis. Catalyzes with low efficiency the oxidation of betaine aldehyde to glycine betaine. The chain is Aminoaldehyde dehydrogenase ALDH10A8, chloroplastic from Arabidopsis thaliana (Mouse-ear cress).